The chain runs to 908 residues: Oxysterol-binding protein 2 (908 aa).

The disordered stretch occupies residues 42-112 (SAFGSGPASK…GLWPGSENGT (71 aa)). The segment covering 81-90 (EPGSQTTSVP) has biased composition (polar residues). A PH domain is found at 179-271 (LDSYKGWLLK…WITALELAKA (93 aa)). Disordered stretches follow at residues 279–299 (TQSDDSGDDDEEPAAPADNSE), 413–445 (RAFCNTPGGPASSSKSFSEGSFLTSKGENSEED), and 822–843 (LMERGRWDEANTEKQRLEEKQR). At serine 284 the chain carries Phosphoserine. Over residues 424–437 (SSSKSFSEGSFLTS) the composition is skewed to low complexity.

It belongs to the OSBP family. In terms of assembly, interacts with CCDC159. As to expression, expressed in the testis (at protein level). Expressed in postmeiotic germ cells of the testis.

It localises to the membrane. Its subcellular location is the cytoplasmic vesicle. The protein localises to the secretory vesicle. It is found in the acrosome. Its function is as follows. Binds 7-ketocholesterol. Acts during spermatid development where its function is required prior to the removal of cytoplasm from the sperm head. In Mus musculus (Mouse), this protein is Oxysterol-binding protein 2 (Osbp2).